We begin with the raw amino-acid sequence, 473 residues long: Peptidoglycan DL-endopeptidase CwlO (473 aa).

The first 30 residues, 1–30 (MRKSLITLGLASVIGTSSFLIPFTSKTASA), serve as a signal peptide directing secretion. 3 disordered regions span residues 31-52 (ETLDEKKQKIESKQSEVASSIE), 79-98 (ALDTSNKIEDKKEENDKTKE), and 237-337 (EASE…GTVI). The span at 33–44 (LDEKKQKIESKQ) shows a compositional bias: basic and acidic residues. The span at 241–250 (LANQKANTEA) shows a compositional bias: polar residues. 2 stretches are compositionally biased toward basic and acidic residues: residues 251–260 (EQARIKKEQE) and 267–277 (KKQEEAQKASD). A compositionally biased stretch (low complexity) spans 291–337 (SSKASSSDDSSDNSSDNSSNGSSNSSSNGSSSKKSSGSNSNSGGTVI). In terms of domain architecture, NlpC/P60 spans 340–471 (SGGIEGAISV…AAFKGVVRRV (132 aa)). The Nucleophile role is filled by C377. The active-site Proton acceptor is the H431. The active site involves N443.

The protein belongs to the peptidase C40 family. Post-translationally, identified in the extracellular proteome as a number of processing products of about 50 and 30 kDa.

The protein resides in the secreted. The protein localises to the cell wall. With respect to regulation, detected in exponentially growing cells, the 50 and 30 kDa processing products disappear upon entry into stationary phase with the concomitant appearance of a 20 kDa products. The 50 kDa form persists in the absence of extracellular proteases. In terms of biological role, the C-terminal part of CwlO shows a cell wall hydrolytic DL-endopeptidase activity. The polypeptide is Peptidoglycan DL-endopeptidase CwlO (cwlO) (Bacillus subtilis (strain 168)).